The following is a 529-amino-acid chain: Pre-rRNA-processing protein pro-1 (529 aa).

WD repeat units follow at residues 136–175 (AHYQ…SADR) and 287–326 (GHSD…CLKV). Positions 416 to 518 (ARNEAAKAEK…LKEINKQMYE (103 aa)) form a coiled coil. Positions 436-470 (TLGDDEDDAPEVGNQRRKSGKKNKKNRKNQKKNDF) are disordered. A compositionally biased stretch (basic residues) spans 450–465 (QRRKSGKKNKKNRKNQ).

The protein belongs to the WD repeat IPI3/WDR18 family. In terms of assembly, component of the PELP1 complex, composed of at least PELP1, TEX10 and WDR18. The complex interacts with pre-60S ribosome particles.

The protein resides in the nucleus. The protein localises to the nucleolus. Its subcellular location is the nucleoplasm. Component of the PELP1 complex involved in the nucleolar steps of 28S rRNA maturation and the subsequent nucleoplasmic transit of the pre-60S ribosomal subunit. Required for processing ITS2 sequences from rRNA intermediates during 26S rRNA maturation. Required in the soma to promote normal proliferation and prevent germline tumor formation. This Caenorhabditis elegans protein is Pre-rRNA-processing protein pro-1.